A 274-amino-acid polypeptide reads, in one-letter code: Penicillin-insensitive murein endopeptidase (274 aa).

A signal peptide spans 1–19; it reads MNKTAIALLALLASSASLA. 3 disulfide bridges follow: cysteine 44–cysteine 265, cysteine 187–cysteine 235, and cysteine 216–cysteine 223. Histidine 110, histidine 113, aspartate 120, aspartate 147, histidine 150, and histidine 211 together coordinate Zn(2+). The disordered stretch occupies residues 228–265; it reads LPPPGDGCGAELQSWFAPPKPGTTKPEKKTPPPLPPSC.

The protein belongs to the peptidase M74 family. In terms of assembly, dimer. Zn(2+) serves as cofactor.

It is found in the periplasm. In terms of biological role, murein endopeptidase that cleaves the D-alanyl-meso-2,6-diamino-pimelyl amide bond that connects peptidoglycan strands. Likely plays a role in the removal of murein from the sacculus. The chain is Penicillin-insensitive murein endopeptidase from Shigella boydii serotype 18 (strain CDC 3083-94 / BS512).